Reading from the N-terminus, the 93-residue chain is Integration host factor subunit beta (93 aa).

It belongs to the bacterial histone-like protein family. Heterodimer of an alpha and a beta chain.

Functionally, this protein is one of the two subunits of integration host factor, a specific DNA-binding protein that functions in genetic recombination as well as in transcriptional and translational control. The protein is Integration host factor subunit beta of Aliivibrio salmonicida (strain LFI1238) (Vibrio salmonicida (strain LFI1238)).